Here is a 123-residue protein sequence, read N- to C-terminus: Putative membrane protein insertion efficiency factor (123 aa).

The disordered stretch occupies residues M1–D23.

This sequence belongs to the UPF0161 family.

It localises to the cell inner membrane. In terms of biological role, could be involved in insertion of integral membrane proteins into the membrane. The chain is Putative membrane protein insertion efficiency factor from Brucella ovis (strain ATCC 25840 / 63/290 / NCTC 10512).